Here is a 288-residue protein sequence, read N- to C-terminus: ATP synthase gamma chain (288 aa).

Belongs to the ATPase gamma chain family. F-type ATPases have 2 components, CF(1) - the catalytic core - and CF(0) - the membrane proton channel. CF(1) has five subunits: alpha(3), beta(3), gamma(1), delta(1), epsilon(1). CF(0) has three main subunits: a, b and c.

It localises to the cell inner membrane. Its function is as follows. Produces ATP from ADP in the presence of a proton gradient across the membrane. The gamma chain is believed to be important in regulating ATPase activity and the flow of protons through the CF(0) complex. The protein is ATP synthase gamma chain of Aliivibrio salmonicida (strain LFI1238) (Vibrio salmonicida (strain LFI1238)).